The primary structure comprises 444 residues: ATP-dependent protease ATPase subunit HslU (444 aa).

ATP contacts are provided by residues Ile18 and 60–65 (GVGKTE). Positions 143 to 163 (WGEVESHDSHSSTRQAFRKKL) are disordered. Residues Asp257, Glu322, and Arg394 each contribute to the ATP site.

The protein belongs to the ClpX chaperone family. HslU subfamily. In terms of assembly, a double ring-shaped homohexamer of HslV is capped on each side by a ring-shaped HslU homohexamer. The assembly of the HslU/HslV complex is dependent on binding of ATP.

The protein localises to the cytoplasm. Functionally, ATPase subunit of a proteasome-like degradation complex; this subunit has chaperone activity. The binding of ATP and its subsequent hydrolysis by HslU are essential for unfolding of protein substrates subsequently hydrolyzed by HslV. HslU recognizes the N-terminal part of its protein substrates and unfolds these before they are guided to HslV for hydrolysis. In Haemophilus influenzae (strain PittEE), this protein is ATP-dependent protease ATPase subunit HslU.